Here is a 662-residue protein sequence, read N- to C-terminus: DNA ligase (662 aa).

NAD(+)-binding positions include 31 to 35 and 79 to 80; these read DKDYD and SL. K121 functions as the N6-AMP-lysine intermediate in the catalytic mechanism. NAD(+) contacts are provided by R143, E177, and K313. C406, C409, C422, and C428 together coordinate Zn(2+). The 77-residue stretch at 586 to 662 folds into the BRCT domain; that stretch reads VLESPFMGKT…LSEEEFENMI (77 aa).

This sequence belongs to the NAD-dependent DNA ligase family. LigA subfamily. Mg(2+) is required as a cofactor. Mn(2+) serves as cofactor.

The enzyme catalyses NAD(+) + (deoxyribonucleotide)n-3'-hydroxyl + 5'-phospho-(deoxyribonucleotide)m = (deoxyribonucleotide)n+m + AMP + beta-nicotinamide D-nucleotide.. In terms of biological role, DNA ligase that catalyzes the formation of phosphodiester linkages between 5'-phosphoryl and 3'-hydroxyl groups in double-stranded DNA using NAD as a coenzyme and as the energy source for the reaction. It is essential for DNA replication and repair of damaged DNA. In Clostridium perfringens (strain SM101 / Type A), this protein is DNA ligase.